We begin with the raw amino-acid sequence, 482 residues long: Methylenetetrahydrofolate--tRNA-(uracil-5-)-methyltransferase TrmFO (482 aa).

11-16 (GAGLAG) contacts FAD.

The protein belongs to the MnmG family. TrmFO subfamily. FAD serves as cofactor.

It localises to the cytoplasm. It catalyses the reaction uridine(54) in tRNA + (6R)-5,10-methylene-5,6,7,8-tetrahydrofolate + NADH + H(+) = 5-methyluridine(54) in tRNA + (6S)-5,6,7,8-tetrahydrofolate + NAD(+). It carries out the reaction uridine(54) in tRNA + (6R)-5,10-methylene-5,6,7,8-tetrahydrofolate + NADPH + H(+) = 5-methyluridine(54) in tRNA + (6S)-5,6,7,8-tetrahydrofolate + NADP(+). In terms of biological role, catalyzes the folate-dependent formation of 5-methyl-uridine at position 54 (M-5-U54) in all tRNAs. The protein is Methylenetetrahydrofolate--tRNA-(uracil-5-)-methyltransferase TrmFO of Nitratidesulfovibrio vulgaris (strain DP4) (Desulfovibrio vulgaris).